The chain runs to 405 residues: Elongation factor Tu (405 aa).

In terms of domain architecture, tr-type G spans 10–213; the sequence is KEHVNVGTIG…AMDEYIPTPE (204 aa). Residues 19 to 26 form a G1 region; the sequence is GHVDHGKS. 19–26 provides a ligand contact to GTP; it reads GHVDHGKS. Serine 26 lines the Mg(2+) pocket. The tract at residues 64–68 is G2; the sequence is GITIN. The segment at 85-88 is G3; it reads DCPG. Residues 85 to 89 and 140 to 143 contribute to the GTP site; these read DCPGH and NKCD. The segment at 140-143 is G4; the sequence is NKCD. Residues 178–180 form a G5 region; sequence SAL.

Belongs to the TRAFAC class translation factor GTPase superfamily. Classic translation factor GTPase family. EF-Tu/EF-1A subfamily. In terms of assembly, monomer.

Its subcellular location is the cytoplasm. The catalysed reaction is GTP + H2O = GDP + phosphate + H(+). Functionally, GTP hydrolase that promotes the GTP-dependent binding of aminoacyl-tRNA to the A-site of ribosomes during protein biosynthesis. The polypeptide is Elongation factor Tu (Aquifex pyrophilus).